The sequence spans 826 residues: E3 ubiquitin-protein ligase SH3RF1 (826 aa).

An RING-type zinc finger spans residues 12 to 53; sequence CPVCLERLDASAKVLPCQHTFCKRCLLGIVSSRKELRCPECR. A disordered region spans residues 80–130; the sequence is PRKAGDGGSAGNSTNALRAQGSVTTNGGLNDAQNTQSGQQRIQARSPPVRG. Polar residues predominate over residues 90–122; that stretch reads GNSTNALRAQGSVTTNGGLNDAQNTQSGQQRIQ. 2 consecutive SH3 domains span residues 132-191 and 194-257; these read PQLP…IIKP and QPPP…FNSA. Residues 266-319 are disordered; sequence KPSGADTGEGSSGTSHSGNSQKQADAKKNTKKRHSFTSLTMSNKSSQSVQNRHS. The span at 273–285 shows a compositional bias: low complexity; the sequence is GEGSSGTSHSGNS. Positions 301–317 are enriched in polar residues; the sequence is FTSLTMSNKSSQSVQNR. The SH3 3 domain maps to 398–459; sequence ARPSVFIAIY…PGNYVAPVTR (62 aa). Disordered stretches follow at residues 647–694 and 725–759; these read NSAA…QTNS and DSVS…CSSL. Over residues 652–663 the composition is skewed to basic and acidic residues; that stretch reads KQDKDSKKEKKG. One can recognise an SH3 4 domain in the interval 767-826; it reads RPCERYRVMVSYPPQSEAELELKEGDIVFVHKKREDGWFKGTLQRNGKTGLFPGSFVENI.

The protein belongs to the SH3RF family. Autoubiquitinated. Ubiquitinated by SH3RF2, leading to proteasome-mediated degradation.

It is found in the cytoplasm. The protein localises to the perinuclear region. Its subcellular location is the cell projection. The protein resides in the lamellipodium. It localises to the golgi apparatus. It is found in the trans-Golgi network. It carries out the reaction S-ubiquitinyl-[E2 ubiquitin-conjugating enzyme]-L-cysteine + [acceptor protein]-L-lysine = [E2 ubiquitin-conjugating enzyme]-L-cysteine + N(6)-ubiquitinyl-[acceptor protein]-L-lysine.. It participates in protein modification; protein ubiquitination. Its function is as follows. Has E3 ubiquitin-protein ligase activity. In the absence of an external substrate, it can catalyze self-ubiquitination. Acts as a scaffold protein that contributes to the effective activation of the JNK signaling pathway. Plays an essential role in the anterior neural development. This is E3 ubiquitin-protein ligase SH3RF1 (sh3rf1) from Xenopus laevis (African clawed frog).